Here is a 405-residue protein sequence, read N- to C-terminus: CMP-sialic acid transporter 3 (405 aa).

At 1–39 the chain is on the cytoplasmic side; it reads MKNGIAECPACHSKLVSPGSKTISRAYDDHKIRVSSKQR. A helical membrane pass occupies residues 40-60; sequence VLNVLLVVGDCMLVGLQPVLV. At 61 to 73 the chain is on the lumenal side; that stretch reads YMSKVDGKFNFSP. A helical transmembrane segment spans residues 74–94; the sequence is ISVNFLTEIAKVIFAIVMLLI. Over 95 to 142 the chain is Cytoplasmic; that stretch reads QARHQKVGEKPLLSVSTFVQAARNNVLLAVPALLYAINNYLKFTMQLY. Residues 143–163 form a helical membrane-spanning segment; that stretch reads FNPATVKMLSNLKVLVIAVLL. Residues 164–170 are Lumenal-facing; the sequence is KMVMKRR. A helical membrane pass occupies residues 171–191; it reads FSIIQWEALALLLIGISVNQL. The Cytoplasmic portion of the chain corresponds to 192–199; sequence RSLPEGAT. The helical transmembrane segment at 200 to 220 threads the bilayer; it reads AIGIPLATGAYVCTVIFVTVP. Residues 221–243 lie on the Lumenal side of the membrane; the sequence is SMASVFNEYALKSQYDTSIYLQN. The helical transmembrane segment at 244 to 264 threads the bilayer; that stretch reads LFLYGYGAIFNFLGILGTVIY. The Cytoplasmic segment spans residues 265–280; that stretch reads KGPGSFDILQGHSRAT. Residues 281–301 traverse the membrane as a helical segment; it reads MFLILNNAAQGILSSFFFKYA. Residues 302 to 321 lie on the Lumenal side of the membrane; that stretch reads DTILKKYSSTVATIFTGIAS. A helical transmembrane segment spans residues 322–342; sequence AALFGHVITMNFLLGISIVFI. The Cytoplasmic segment spans residues 343–405; the sequence is SMHQFFSPLA…SDDRTPLLPR (63 aa). The disordered stretch occupies residues 385–405; the sequence is GANEEASHRGESDDRTPLLPR. Positions 389 to 405 are enriched in basic and acidic residues; that stretch reads EASHRGESDDRTPLLPR.

It belongs to the nucleotide-sugar transporter family. CMP-Sialate:CMP antiporter (TC 2.A.7.12) subfamily.

Its subcellular location is the golgi apparatus membrane. Its function is as follows. Sugar transporter involved in the transport of CMP-sialic acid from the cytoplasm into the Golgi. The chain is CMP-sialic acid transporter 3 (UTR6) from Arabidopsis thaliana (Mouse-ear cress).